The chain runs to 192 residues: NADH dehydrogenase [ubiquinone] iron-sulfur protein 3 (192 aa).

The protein belongs to the complex I 30 kDa subunit family. Complex I is composed of about 45 different subunits. This is a component of the iron-sulfur (IP) fragment of the enzyme.

It localises to the mitochondrion inner membrane. The catalysed reaction is a ubiquinone + NADH + 5 H(+)(in) = a ubiquinol + NAD(+) + 4 H(+)(out). Core subunit of the mitochondrial membrane respiratory chain NADH dehydrogenase (Complex I) that is believed to belong to the minimal assembly required for catalysis. Complex I functions in the transfer of electrons from NADH to the respiratory chain. The immediate electron acceptor for the enzyme is believed to be ubiquinone. In Beta vulgaris (Sugar beet), this protein is NADH dehydrogenase [ubiquinone] iron-sulfur protein 3 (NAD9).